A 203-amino-acid chain; its full sequence is Putative phosphoserine phosphatase 2 (203 aa).

His9 acts as the Tele-phosphohistidine intermediate in catalysis. Residue His149 is part of the active site.

The protein belongs to the histidine phosphatase superfamily. Metal-independent phosphoserine phosphatase family. As to quaternary structure, heterodimer with PspA. The PspB subunit appears to have no or considerably lower PSP activity compared with that of PspA.

It catalyses the reaction O-phospho-L-serine + H2O = L-serine + phosphate. The enzyme catalyses O-phospho-D-serine + H2O = D-serine + phosphate. Its pathway is amino-acid biosynthesis; L-serine biosynthesis; L-serine from 3-phospho-D-glycerate: step 3/3. With respect to regulation, activity is not inhibited by EDTA in vitro, nor enhanced by the addition of Mg(2+). In terms of biological role, part of a complex that catalyzes the dephosphorylation of L-phosphoserine to serine and inorganic phosphate. Is poorly or not active toward D-phosphoserine, DL-phosphothreonine, 3-phosphoglycerate, para-nitrophenylphosphate, and fructose-6-phosphate. Does not display phosphoglycerate mutase activity. The chain is Putative phosphoserine phosphatase 2 (pspB) from Hydrogenobacter thermophilus (strain DSM 6534 / IAM 12695 / TK-6).